The sequence spans 92 residues: Tachykinin-2 (92 aa).

The N-terminal stretch at 1–22 (MIRVGLILCCIFIVGVFEASSA) is a signal peptide. The propeptide occupies 23–37 (DDILTAHNLIKRSEV). Position 49 is a methionine amide (methionine 49). A propeptide spanning residues 52–92 (SEELTRRLIQHPGSMSETSKRGPPKKGDFNPNELKPESNIC) is cleaved from the precursor. The interval 61–92 (QHPGSMSETSKRGPPKKGDFNPNELKPESNIC) is disordered.

It belongs to the tachykinin family. As to expression, expressed in the posterior salivary gland and more specifically in the mucus-secreting gland cells.

Its subcellular location is the secreted. Functionally, tachykinins are active peptides which excite neurons, evoke behavioral responses, are potent vasodilators and secretagogues, and contract (directly or indirectly) many smooth muscles. This Octopus vulgaris (Common octopus) protein is Tachykinin-2.